A 338-amino-acid chain; its full sequence is Transcription factor MYB76 (338 aa).

HTH myb-type domains lie at 9–65 and 66–116; these read GEGL…KPDI and KRGE…KKRL. 2 DNA-binding regions (H-T-H motif) span residues 37 to 61 and 89 to 112; these read WRDI…TNYL and WSVI…NTHL. Disordered stretches follow at residues 123 to 171 and 176 to 195; these read PVTH…SSNL and SKIS…CKKR. Residues 140 to 154 show a composition bias toward basic and acidic residues; it reads MKFDFQKKSNQDEHS. The span at 155 to 171 shows a compositional bias: low complexity; sequence SQSSSTTPASLPLSSNL.

Can form complexes with MYC2, MYC3 or MYC4. As to expression, expressed in both vegetative and generative organs. Mostly present in inflorescences, flowers and seedlings, in the transition zone between roots and the foliar part, and stems, and, to a lower extent, in leaves (in midvein and trichomes).

It localises to the nucleus. Plays a role in determining the spatial distribution of aliphatic glucosinolates (AGLSs) within the leaf, mostly short chained. Together with MYB28/HAG1 and MYB29/HAG3, promotes aliphatic glucosinolate biosynthesis and represses indolic glucosinolate biosynthesis, but could not activate AGSL biosynthesis on its own. This Arabidopsis thaliana (Mouse-ear cress) protein is Transcription factor MYB76 (MYB76).